The following is a 1237-amino-acid chain: MTEISVKLPHEPYNIQVTVSSQEQVQDVRQSIVELPGTFQYTSFHLEHNGTRINDYIELSEVKDIQANSEVVLVEDPYTEKEARMHVIRIRELIGAAGDRVDNLHGICAGLSLHDSVAAGEQLTDTKEGERGVVRDHALVDYDMTAPPVLQTILPRAQPSLPKTVKAISLSPWNPPPYHLRQRGHLLYLQVTTNEGEQHQITSHVSGFFVNKSSNAKFDPFPRPAPKNYSAHSLLTLISMLSPSFDASFKALQESNNKKDLLTTFPFQNSIPKNPWLVPPTSSAVTAHQSDITRSQENCLIFGVDNSETLRDWNEEFQSTRELPRETVQDKVSRERLTSKLFADYNDAAARGAVLVAKGEIAPLNPTEGKDAQIFVYNNIFFSFGADGVGTFASEGGDEAARVAVGKDVVGAKAVNQLDIPGLFTPGTVVVDYLGKRLVGQSIVPGIFKQREPGEHQIDYGGVEGKEVVAEHKDFVPVFEKLSASLRVKKHPVWDKEGKRHDLEGSVETKGLLGTDGRKYVLDLYRITPLDVAWSEDAEGHEPYPHRMSVLRLELVELYWRYKMGQYVKAEVQKRKTAKREAEKTKAVEAQNEDKAELLSTSDPGEGENKAVASEQERVDISAFKLALNPDVFSGQVPQTDEEKEEWAQDEKEVRSACDHLISKVIPELIQDLHDGDVGFPMDGESLTQLLHKRGINVRYLGKLAKLSQAKGQRLLALTALLIQEMVSRSFKHIANRYLRYLPSPFTASCVSHLLNCFLGAEVNSNPRPEIDEELREIYPEGDFSFEKVTPTSLKGDIEKQIKIRFRFNLEPKWTSSLKHLQLLRDISIKLGLQIGAREFAFERSQIKSQEHSPEPSSTHSSQDERGKRKKKKGSNSDSPSRVAASPRPVVTFVPEDILNIVPLVKDASPRSALAEEALEAGRISIMQNQKEIGQELILESLSLHEQIYGILHPEVAKLYHQLSMLYYQTDEKEAAVELARKAVIVTERTMGVDSADTILSYLNLSLFEHASGNTHTALIYIRHALELWKIIYGSHHPDSITTMNNAAVMLQHLKKYPDSRKWFEASLTVCEGLFGRQSINTATILFQLAQALALDQDSKAAVNRMRDAYNIFLNELGPNDRNTKEAESWLEQLTQNAVSIAKHAKDIQARRLRRTNLSPRMTIGTKPQPQVGQNAPATTNGATSKSIGLDSRSIDELLKFIEGGGESRSPRSKQKKRAAASNPKLRGSKQSTVQTA.

A Clu domain is found at 291 to 535 (DITRSQENCL…RITPLDVAWS (245 aa)). Composition is skewed to basic and acidic residues over residues 575–597 (RKTAKREAEKTKAVEAQNEDKAE) and 845–854 (SQIKSQEHSP). Disordered regions lie at residues 575-614 (RKTAKREAEKTKAVEAQNEDKAELLSTSDPGEGENKAVAS) and 845-886 (SQIK…VAAS). 3 TPR repeats span residues 957-990 (AKLYHQLSMLYYQTDEKEAAVELARKAVIVTERT), 999-1032 (ILSYLNLSLFEHASGNTHTALIYIRHALELWKII), and 1041-1074 (ITTMNNAAVMLQHLKKYPDSRKWFEASLTVCEGL). Disordered stretches follow at residues 1152 to 1189 (RLRRTNLSPRMTIGTKPQPQVGQNAPATTNGATSKSIG) and 1201 to 1237 (FIEGGGESRSPRSKQKKRAAASNPKLRGSKQSTVQTA). Positions 1156-1187 (TNLSPRMTIGTKPQPQVGQNAPATTNGATSKS) are enriched in polar residues.

It belongs to the CLU family. May associate with the eukaryotic translation initiation factor 3 (eIF-3) complex.

The protein localises to the cytoplasm. MRNA-binding protein involved in proper cytoplasmic distribution of mitochondria. The chain is Clustered mitochondria protein homolog from Ajellomyces capsulatus (strain NAm1 / WU24) (Darling's disease fungus).